The following is a 204-amino-acid chain: MSMAPEHDFFFKILLIGDSGVGKSCLLLRFADDSWTDTHISTIGVDFKIKTLNLDGKTIKLQIWDTAGQERFRTITSSYYRGAQGIILVYDCTDQDSFTNVKQWMGEIDRYACENVNKLLVGNKTDLVNEKVVDSNQAKSFAESYGIPFIETSAKNATNVEECFISMARDIKNRLADIQETPKPDEVDIKSKNKTKSGGKKSFC.

GTP is bound by residues 17–25, 35–42, 65–69, 123–126, and 153–155; these read GDSGVGKSC, WTDTHIST, DTAGQ, NKTD, and SAK. The short motif at 39–47 is the Effector region element; sequence HISTIGVDF. Positions 182 to 191 are enriched in basic and acidic residues; it reads PKPDEVDIKS. Residues 182–204 are disordered; that stretch reads PKPDEVDIKSKNKTKSGGKKSFC. Residues 192–204 are compositionally biased toward basic residues; that stretch reads KNKTKSGGKKSFC. Cysteine 204 is lipidated: S-geranylgeranyl cysteine.

The protein belongs to the small GTPase superfamily. Rab family.

The protein resides in the cell membrane. This is Ras-related protein Rab-1D (rab1D) from Dictyostelium discoideum (Social amoeba).